The primary structure comprises 415 residues: Methylthioribose-1-phosphate isomerase (415 aa).

Residue Asp284 is the Proton donor of the active site.

This sequence belongs to the eIF-2B alpha/beta/delta subunits family. MtnA subfamily.

It localises to the cytoplasm. The protein resides in the nucleus. It catalyses the reaction 5-(methylsulfanyl)-alpha-D-ribose 1-phosphate = 5-(methylsulfanyl)-D-ribulose 1-phosphate. It participates in amino-acid biosynthesis; L-methionine biosynthesis via salvage pathway; L-methionine from S-methyl-5-thio-alpha-D-ribose 1-phosphate: step 1/6. In terms of biological role, catalyzes the interconversion of methylthioribose-1-phosphate (MTR-1-P) into methylthioribulose-1-phosphate (MTRu-1-P). The sequence is that of Methylthioribose-1-phosphate isomerase from Vanderwaltozyma polyspora (strain ATCC 22028 / DSM 70294 / BCRC 21397 / CBS 2163 / NBRC 10782 / NRRL Y-8283 / UCD 57-17) (Kluyveromyces polysporus).